The primary structure comprises 479 residues: GTPase Obg (479 aa).

The Obg domain maps to 2–159; sequence TTFVDRVELH…QDIVLELKTV (158 aa). The segment at 61-87 is disordered; that stretch reads HHKPHRSATNGKPGEGGNRSGKDGQDL. Positions 160 to 331 constitute an OBG-type G domain; that stretch reads ADVALVGYPS…LSFALAELVG (172 aa). Residues 166–173, 191–195, 212–215, 283–286, and 312–314 each bind GTP; these read GYPSAGKS, FTTLV, DVPG, NKID, and SAV. Mg(2+)-binding residues include serine 173 and threonine 193. An OCT domain is found at 349 to 431; that stretch reads PKAVDDAGFT…DNAVVFDWEP (83 aa). Positions 440–453 are enriched in basic and acidic residues; that stretch reads LGRRGEDHRLDEPR. Residues 440–479 are disordered; it reads LGRRGEDHRLDEPRPAAQRRRDKQAERDDAEKEYDDFEPF. Residues 470–479 show a composition bias toward acidic residues; the sequence is EKEYDDFEPF.

Belongs to the TRAFAC class OBG-HflX-like GTPase superfamily. OBG GTPase family. As to quaternary structure, monomer. It depends on Mg(2+) as a cofactor.

It localises to the cytoplasm. In terms of biological role, an essential GTPase which binds GTP, GDP and possibly (p)ppGpp with moderate affinity, with high nucleotide exchange rates and a fairly low GTP hydrolysis rate. Plays a role in control of the cell cycle, stress response, ribosome biogenesis and in those bacteria that undergo differentiation, in morphogenesis control. The sequence is that of GTPase Obg from Streptomyces avermitilis (strain ATCC 31267 / DSM 46492 / JCM 5070 / NBRC 14893 / NCIMB 12804 / NRRL 8165 / MA-4680).